Reading from the N-terminus, the 330-residue chain is GMP reductase (330 aa).

The active-site Thioimidate intermediate is the Cys180. 209–232 (LIADGGIRHNGDIAKSVRFGASMV) serves as a coordination point for NADP(+).

Belongs to the IMPDH/GMPR family. GuaC type 2 subfamily.

The catalysed reaction is IMP + NH4(+) + NADP(+) = GMP + NADPH + 2 H(+). Catalyzes the irreversible NADPH-dependent deamination of GMP to IMP. It functions in the conversion of nucleobase, nucleoside and nucleotide derivatives of G to A nucleotides, and in maintaining the intracellular balance of A and G nucleotides. The sequence is that of GMP reductase from Lactobacillus delbrueckii subsp. bulgaricus (strain ATCC 11842 / DSM 20081 / BCRC 10696 / JCM 1002 / NBRC 13953 / NCIMB 11778 / NCTC 12712 / WDCM 00102 / Lb 14).